The chain runs to 352 residues: uncharacterized protein (352 aa).

An N-terminal signal peptide occupies residues methionine 1 to alanine 22. Residues serine 25–serine 47 show a composition bias toward low complexity. Residues serine 25–alanine 49 form a disordered region. N-linked (GlcNAc...) asparagine glycans are attached at residues asparagine 76, asparagine 110, asparagine 182, asparagine 212, and asparagine 223.

Its subcellular location is the secreted. This is an uncharacterized protein from Dictyostelium discoideum (Social amoeba).